Reading from the N-terminus, the 243-residue chain is tRNA (guanine-N(1)-)-methyltransferase (243 aa).

S-adenosyl-L-methionine is bound by residues glycine 108 and 127–132; that span reads LGDFVL.

Belongs to the RNA methyltransferase TrmD family. As to quaternary structure, homodimer.

It is found in the cytoplasm. It catalyses the reaction guanosine(37) in tRNA + S-adenosyl-L-methionine = N(1)-methylguanosine(37) in tRNA + S-adenosyl-L-homocysteine + H(+). Functionally, specifically methylates guanosine-37 in various tRNAs. In Streptococcus pyogenes serotype M2 (strain MGAS10270), this protein is tRNA (guanine-N(1)-)-methyltransferase.